Consider the following 415-residue polypeptide: Corticotropin-releasing factor receptor 1 (415 aa).

A signal peptide spans 1 to 23 (MGRRPQLRLVKALLLLGLNPVST). Over 24–111 (SLQDQRCENL…CQEILNEEKK (88 aa)) the chain is Extracellular. 3 disulfides stabilise this stretch: C30–C54, C44–C87, and C68–C102. N-linked (GlcNAc...) asparagine glycosylation is found at N38, N45, N78, N90, and N98. Residues 99–108 (YSECQEILNE) are important for peptide agonist binding. Residues 112–142 (SKVHYHVAVIINYLGHCISLVALLVAFVLFL) form a helical membrane-spanning segment. Residues 143 to 149 (RLRSIRC) are Cytoplasmic-facing. The chain crosses the membrane as a helical span at residues 150–174 (LRNIIHWNLISAFILRNATWFVVQL). At 175–189 (TVSPEVHQSNVAWCR) the chain is on the extracellular side. Cysteines 188 and 258 form a disulfide. The helical transmembrane segment at 190-218 (LVTAAYNYFHVTNFFWMFGEGCYLHTAIV) threads the bilayer. Topologically, residues 219 to 225 (LTYSTDR) are cytoplasmic. Residues 226-253 (LRKWMFVCIGWGVPFPIIVAWAIGKLHY) form a helical membrane-spanning segment. Residues 254 to 269 (DNEKCWFGKRPGVYTD) are Extracellular-facing. The chain crosses the membrane as a helical span at residues 270 to 295 (YIYQGPMILVLLINFIFLFNIVRILM). Residues 280-290 (LLINFIFLFNI) form an important for antagonist binding region. Residues 296 to 306 (TKLRASTTSET) are Cytoplasmic-facing. Position 301 is a phosphoserine; by PKA (S301). The helical transmembrane segment at 307 to 331 (IQYRKAVKATLVLLPLLGITYMLFF) threads the bilayer. Topologically, residues 332-338 (VNPGEDE) are extracellular. The chain crosses the membrane as a helical span at residues 339 to 368 (VSRVVFIYFNSFLESFQGFFVSVFYCFLNS). The Cytoplasmic segment spans residues 369–415 (EVRSAIRKRWRRWQDKHSIRARVARAMSIPTSPTRVSFHSIKQSTAV).

It belongs to the G-protein coupled receptor 2 family. As to quaternary structure, interacts (via N-terminal extracellular domain) with CRH and UCN. Interacts with DLG1; this inhibits endocytosis of CRHR1 after agonist binding. Heterodimer; heterodimerizes with GPER1. C-terminal Ser or Thr residues may be phosphorylated. Post-translationally, phosphorylation at Ser-301 by PKA prevents maximal coupling to Gq-protein, and thereby negatively regulates downstream signaling. In terms of tissue distribution, detected in brain, especially in cerebellum. Detected in pituitary gland, and at lower levels in the olfactory bulb.

It localises to the cell membrane. The protein localises to the endosome. Functionally, G-protein coupled receptor for CRH (corticotropin-releasing factor) and UCN (urocortin). Has high affinity for CRH and UCN. Ligand binding causes a conformation change that triggers signaling via guanine nucleotide-binding proteins (G proteins) and down-stream effectors, such as adenylate cyclase. Promotes the activation of adenylate cyclase, leading to increased intracellular cAMP levels. Inhibits the activity of the calcium channel CACNA1H. Required for normal embryonic development of the adrenal gland and for normal hormonal responses to stress. Plays a role in the response to anxiogenic stimuli. This chain is Corticotropin-releasing factor receptor 1 (Crhr1), found in Rattus norvegicus (Rat).